The primary structure comprises 662 residues: Chaperone protein HtpG (662 aa).

The interval 1–352 (MSKQTLSFQA…SADLPLNVSR (352 aa)) is a; substrate-binding. The interval 353–594 (ELLQESRDVR…GDGMSTQLAR (242 aa)) is b. Residues 382-402 (HDRHDSPAPQPAEGADRVSDV) form a disordered region. Residues 595-662 (LLKQAGQQAP…YVKRVNALLV (68 aa)) form a c region.

The protein belongs to the heat shock protein 90 family. As to quaternary structure, homodimer.

It is found in the cytoplasm. Its function is as follows. Molecular chaperone. Has ATPase activity. The polypeptide is Chaperone protein HtpG (Verminephrobacter eiseniae (strain EF01-2)).